The following is a 459-amino-acid chain: Flavin-containing monooxygenase FMO GS-OX1 (459 aa).

17-22 lines the FAD pocket; sequence GAGAAG. NADP(+) is bound at residue 211-216; the sequence is GNYASG.

It belongs to the FMO family. FAD is required as a cofactor. As to expression, mainly expressed in leaves. Low levels in flowers and seeds.

It catalyses the reaction a (Z)-omega-(methylsulfanyl)-N-sulfo-alkylhydroximate S-glucoside + NADPH + O2 + H(+) = a (Z)-omega-(methylsulfinyl)-alkyl-glucosinolate + NADP(+) + H2O. Functionally, catalyzes the conversion of methylthioalkyl glucosinolates into methylsulfinylalkyl glucosinolates. Able to S-oxygenate both desulfo- and intact 4-methylthiobutyl glucosinolates, but no activity with methionine, dihomomethionine or 5-methylthiopentaldoxime. This Arabidopsis thaliana (Mouse-ear cress) protein is Flavin-containing monooxygenase FMO GS-OX1 (FMOGS-OX1).